Reading from the N-terminus, the 419-residue chain is Serine hydroxymethyltransferase 2 (419 aa).

(6S)-5,6,7,8-tetrahydrofolate contacts are provided by residues Leu-120 and 124-126 (GHL). Lys-229 is subject to N6-(pyridoxal phosphate)lysine.

The protein belongs to the SHMT family. Homodimer. The cofactor is pyridoxal 5'-phosphate.

The protein resides in the cytoplasm. The catalysed reaction is (6R)-5,10-methylene-5,6,7,8-tetrahydrofolate + glycine + H2O = (6S)-5,6,7,8-tetrahydrofolate + L-serine. Its pathway is one-carbon metabolism; tetrahydrofolate interconversion. The protein operates within amino-acid biosynthesis; glycine biosynthesis; glycine from L-serine: step 1/1. In terms of biological role, catalyzes the reversible interconversion of serine and glycine with tetrahydrofolate (THF) serving as the one-carbon carrier. This reaction serves as the major source of one-carbon groups required for the biosynthesis of purines, thymidylate, methionine, and other important biomolecules. Also exhibits THF-independent aldolase activity toward beta-hydroxyamino acids, producing glycine and aldehydes, via a retro-aldol mechanism. This chain is Serine hydroxymethyltransferase 2, found in Salmonella typhi.